The primary structure comprises 175 residues: Cell number regulator 9 (175 aa).

A run of 2 helical transmembrane segments spans residues 53 to 73 and 80 to 100; these read GLCC…AEIV and CGVA…HWIY.

It belongs to the cornifelin family. Expressed in roots, coleoptiles, leaves and stalks.

The protein resides in the membrane. The polypeptide is Cell number regulator 9 (CNR9) (Zea mays (Maize)).